We begin with the raw amino-acid sequence, 358 residues long: Bis(monoacylglycero)phosphate synthase CLN5 (358 aa).

Over Met-1–Arg-23 the chain is Cytoplasmic. A helical; Signal-anchor for type II membrane protein transmembrane segment spans residues Ala-24–Gly-40. At Trp-41–Leu-358 the chain is on the lumenal side. 2 disulfide bridges follow: Cys-70–Cys-159 and Cys-77–Cys-165. Catalysis depends on His-117, which acts as the Proton acceptor. Asn-130, Asn-143, Asn-178, and Asn-203 each carry an N-linked (GlcNAc...) asparagine glycan. The active-site Nucleophile; Acyl-thioester intermediate is Cys-231. Residues Asn-255, Asn-271, and Asn-281 are each glycosylated (N-linked (GlcNAc...) asparagine). The segment at Phe-304–Tyr-343 is membrane-anchoring. A glycan (N-linked (GlcNAc...) asparagine) is linked at Asn-352.

The protein belongs to the CLN5 family. In terms of assembly, multimer. Interacts with SORT1, RAB5A and RAB7A. Interacts with PPT1, TPP1, CLN3, CLN6, CLN8, ATP5F1A and ATP5F1B. In terms of processing, N-glycosylated with both high mannose and complex type sugars. Glycosylation is important for proper folding and trafficking to the lysosomes. The type II membrane signal anchor is proteolytically cleaved to produce a mature form that is transported to the lysosomes (Bis(monoacylglycero)phosphate synthase CLN5, secreted form). Post-translationally, can undergo proteolytic cleavage at the C-terminus, probably by a cysteine protease and may involve the removal of approximately 10-15 residues from the C-terminal end. As to expression, ubiquitous.

Its subcellular location is the lysosome. The protein localises to the membrane. It catalyses the reaction S-hexadecanoyl-L-cysteinyl-[protein] + H2O = L-cysteinyl-[protein] + hexadecanoate + H(+). The catalysed reaction is 2 1-acyl-sn-glycero-3-phospho-(1'-sn-glycerol) = 1-acyl-sn-glycero-3-phospho-(3'-acyl-sn-1'-glycerol) + sn-glycero-3-phospho-(1'-sn-glycerol). It carries out the reaction 2 1-(9Z-octadecenoyl)-sn-glycero-3-phospho-(1'-sn-glycerol) = 1-(9Z-octadecenoyl)-sn-glycero-3-phospho-(3'-(9Z-octadecenoyl)-1'-sn-glycerol) + sn-glycero-3-phospho-(1'-sn-glycerol). The enzyme catalyses 2 1-octadecanoyl-sn-glycero-3-phospho-(1'-sn-glycerol) = 1-octadecanoyl-sn-glycero-3-phospho-(3'-octadecanoyl-1'-sn-glycerol) + sn-glycero-3-phospho-(1'-sn-glycerol). It catalyses the reaction 2 1-hexadecanoyl-sn-glycero-3-phospho-(1'-sn-glycerol) = 1-hexadecanoyl-sn-glycero-3-phospho-(3'-hexadecanoyl-1'-sn-glycerol) + sn-glycero-3-phospho-(1'-sn-glycerol). The catalysed reaction is 2 1-tetradecanoyl-sn-glycero-3-phospho-(1'-sn-glycerol) = 1-tetradecanoyl-sn-glycero-3-phospho-(3'-tetradecanoyl-1'-sn-glycerol) + sn-glycero-3-phospho-(1'-sn-glycerol). With respect to regulation, anionic phospholipids activate bis(monoacylglycero)phosphate (BMP) synthase activity. Amiodarone, a cationic amphiphilic drug inhibits BMP synthase activity towards liposomal lysophosphatidylglycerol. Palmostatin B inhibits palmitoyl protein thioesterase activity. In terms of biological role, catalyzes the synthesis of bis(monoacylglycero)phosphate (BMP) via transacylation of 2 molecules of lysophosphatidylglycerol (LPG). BMP also known as lysobisphosphatidic acid plays a key role in the formation of intraluminal vesicles and in maintaining intracellular cholesterol homeostasis. Can use only LPG as the exclusive lysophospholipid acyl donor for base exchange and displays BMP synthase activity towards various LPGs (LPG 14:0, LPG 16:0, LPG 18:0, LPG 18:1) with a higher preference for longer chain lengths. Plays a role in influencing the retrograde trafficking of lysosomal sorting receptors SORT1 and IGF2R from the endosomes to the trans-Golgi network by controlling the recruitment of retromer complex to the endosomal membrane. Regulates the localization and activation of RAB7A which is required to recruit the retromer complex to the endosomal membrane. Its function is as follows. Exhibits palmitoyl protein thioesterase (S-depalmitoylation) activity in vitro and most likely plays a role in protein S-depalmitoylation. The sequence is that of Bis(monoacylglycero)phosphate synthase CLN5 (CLN5) from Homo sapiens (Human).